The primary structure comprises 86 residues: Exodeoxyribonuclease 7 small subunit (86 aa).

The protein belongs to the XseB family. As to quaternary structure, heterooligomer composed of large and small subunits.

It is found in the cytoplasm. The catalysed reaction is Exonucleolytic cleavage in either 5'- to 3'- or 3'- to 5'-direction to yield nucleoside 5'-phosphates.. In terms of biological role, bidirectionally degrades single-stranded DNA into large acid-insoluble oligonucleotides, which are then degraded further into small acid-soluble oligonucleotides. The sequence is that of Exodeoxyribonuclease 7 small subunit from Xanthomonas oryzae pv. oryzae (strain MAFF 311018).